The chain runs to 184 residues: Ribosome maturation factor RimM (184 aa).

Positions 111–184 (DDEFYWVDLI…HIVVDWGLDY (74 aa)) constitute a PRC barrel domain.

Belongs to the RimM family. In terms of assembly, binds ribosomal protein uS19.

The protein resides in the cytoplasm. Its function is as follows. An accessory protein needed during the final step in the assembly of 30S ribosomal subunit, possibly for assembly of the head region. Essential for efficient processing of 16S rRNA. May be needed both before and after RbfA during the maturation of 16S rRNA. It has affinity for free ribosomal 30S subunits but not for 70S ribosomes. This chain is Ribosome maturation factor RimM, found in Ralstonia nicotianae (strain ATCC BAA-1114 / GMI1000) (Ralstonia solanacearum).